Consider the following 101-residue polypeptide: NADH-quinone oxidoreductase subunit K (101 aa).

The next 3 helical transmembrane spans lie at 4–24, 30–50, and 62–82; these read LGHL…GIFL, IVLL…FIAF, and FVFF…AILV.

This sequence belongs to the complex I subunit 4L family. NDH-1 is composed of 14 different subunits. Subunits NuoA, H, J, K, L, M, N constitute the membrane sector of the complex.

The protein resides in the cell inner membrane. It carries out the reaction a quinone + NADH + 5 H(+)(in) = a quinol + NAD(+) + 4 H(+)(out). NDH-1 shuttles electrons from NADH, via FMN and iron-sulfur (Fe-S) centers, to quinones in the respiratory chain. The immediate electron acceptor for the enzyme in this species is believed to be ubiquinone. Couples the redox reaction to proton translocation (for every two electrons transferred, four hydrogen ions are translocated across the cytoplasmic membrane), and thus conserves the redox energy in a proton gradient. The sequence is that of NADH-quinone oxidoreductase subunit K from Xanthomonas axonopodis pv. citri (strain 306).